The sequence spans 506 residues: Acrylate reductase flavoprotein subunit (506 aa).

Positions 1–30 (MSNKDLLGRRNFIKGMGAAAGVAMAAPALA) form a signal peptide, tat-type signal. Residues alanine 54, glutamate 74, asparagine 82, glycine 87, and glycine 88 each contribute to the FAD site. Arginine 333 acts as the Proton donor in catalysis. Positions 473 and 489 each coordinate FAD.

Belongs to the FAD-dependent oxidoreductase 2 family. FRD/SDH subfamily. In terms of assembly, the ArdAB flavocytochrome c is composed of a FAD-containing subunit (ArdA) and a heme c-containing subunit (ArdB). Requires FAD as cofactor. In terms of processing, predicted to be exported by the Tat system. The position of the signal peptide cleavage has not been experimentally proven.

The protein resides in the periplasm. Methacrylate acts as a competitive inhibitor of the acrylate reductase activity and suppresses the reductase activity in dose-dependent manner. FAD-containing subunit of the ArdAB flavocytochrome c, which catalyzes the reduction of acrylate to propanoate and supports dimethylsulfoniopropionate-dependent anaerobic respiration. In vitro, can use the artificial electron donor methyl viologen. The natural electron donor is probably a low-potential cytochrome c. Also shows weak activity toward methacrylate in vitro (at a 22-fold lower rate) but cannot use other tested 2-enoates, including crotonic, fumaric, sorbic, urocanic, cinnamic, p-coumaric, caffeic or ferulic acids. The protein catalyzes a unidirectional reaction and cannot oxidize propanoate with phenazine metasulfate and dichlorophenolindophenol as electron acceptors. The chain is Acrylate reductase flavoprotein subunit from Shewanella woodyi (strain ATCC 51908 / MS32).